Here is a 121-residue protein sequence, read N- to C-terminus: Large ribosomal subunit protein bL12 (121 aa).

The protein belongs to the bacterial ribosomal protein bL12 family. Homodimer. Part of the ribosomal stalk of the 50S ribosomal subunit. Forms a multimeric L10(L12)X complex, where L10 forms an elongated spine to which 2 to 4 L12 dimers bind in a sequential fashion. Binds GTP-bound translation factors.

In terms of biological role, forms part of the ribosomal stalk which helps the ribosome interact with GTP-bound translation factors. Is thus essential for accurate translation. The sequence is that of Large ribosomal subunit protein bL12 from Pseudomonas savastanoi pv. phaseolicola (strain 1448A / Race 6) (Pseudomonas syringae pv. phaseolicola (strain 1448A / Race 6)).